Reading from the N-terminus, the 113-residue chain is Nitrogenase vanadium-iron protein delta chain (113 aa).

As to quaternary structure, hexamer of two alpha, two beta, and two delta chains. Iron-sulfur cluster is required as a cofactor. Requires vanadium cation as cofactor.

The enzyme catalyses N2 + 8 reduced [2Fe-2S]-[ferredoxin] + 16 ATP + 16 H2O = H2 + 8 oxidized [2Fe-2S]-[ferredoxin] + 2 NH4(+) + 16 ADP + 16 phosphate + 6 H(+). The key enzymatic reactions in nitrogen fixation are catalyzed by the nitrogenase complex, which has 2 components: the iron protein (component 2) and a component 1 which is either a molybdenum-iron protein, a vanadium-iron, or an iron-iron protein. The polypeptide is Nitrogenase vanadium-iron protein delta chain (vnfG) (Azotobacter salinestris).